Consider the following 71-residue polypeptide: MIPSSTRELLNIADSKYAVVVAVAKRARTLSEKYKEDENYRLSTMVTRALDEVVNGKVIIEPSKEDGSREV.

It belongs to the RNA polymerase subunit omega family. The RNAP catalytic core consists of 2 alpha, 1 beta, 1 beta' and 1 omega subunit. When a sigma factor is associated with the core the holoenzyme is formed, which can initiate transcription.

The enzyme catalyses RNA(n) + a ribonucleoside 5'-triphosphate = RNA(n+1) + diphosphate. Its function is as follows. Promotes RNA polymerase assembly. Latches the N- and C-terminal regions of the beta' subunit thereby facilitating its interaction with the beta and alpha subunits. The polypeptide is DNA-directed RNA polymerase subunit omega (Syntrophomonas wolfei subsp. wolfei (strain DSM 2245B / Goettingen)).